Here is a 786-residue protein sequence, read N- to C-terminus: Endonuclease MutS2 (786 aa).

332–339 is an ATP binding site; the sequence is GPNTGGKT. The region spanning 711-786 is the Smr domain; sequence IDLRGMDSEE…GTGVTVVILK (76 aa).

Belongs to the DNA mismatch repair MutS family. MutS2 subfamily. In terms of assembly, homodimer. Binds to stalled ribosomes, contacting rRNA.

Endonuclease that is involved in the suppression of homologous recombination and thus may have a key role in the control of bacterial genetic diversity. Functionally, acts as a ribosome collision sensor, splitting the ribosome into its 2 subunits. Detects stalled/collided 70S ribosomes which it binds and splits by an ATP-hydrolysis driven conformational change. Acts upstream of the ribosome quality control system (RQC), a ribosome-associated complex that mediates the extraction of incompletely synthesized nascent chains from stalled ribosomes and their subsequent degradation. Probably generates substrates for RQC. This is Endonuclease MutS2 from Clostridium perfringens (strain SM101 / Type A).